Reading from the N-terminus, the 456-residue chain is CBL-interacting serine/threonine-protein kinase 2 (456 aa).

A Protein kinase domain is found at 12–266 (YEVGRLLGQG…IAKIKESSWF (255 aa)). Residues 18-26 (LGQGTFAKV) and lysine 41 each bind ATP. Aspartate 134 (proton acceptor) is an active-site residue. Residues 152–181 (DFGLSALADCKRQDGLLHTTCGTPAYVAPE) are activation loop. Phosphoserine is present on serine 156. At threonine 170 the chain carries Phosphothreonine. Positions 280–309 (MEKQQVREATNPMEAGGSGQNENGENHEPP) are disordered. An NAF domain is found at 309–333 (PRLATLNAFDIIALSTGFGLAGLFG). A PPI region spans residues 338–367 (KRESRFASQKPASEIISKLVEVAKCLKLKI).

Belongs to the protein kinase superfamily. CAMK Ser/Thr protein kinase family. SNF1 subfamily. Interacts with CBL2, CBL3 and CBL5. Mn(2+) is required as a cofactor.

The catalysed reaction is L-seryl-[protein] + ATP = O-phospho-L-seryl-[protein] + ADP + H(+). It carries out the reaction L-threonyl-[protein] + ATP = O-phospho-L-threonyl-[protein] + ADP + H(+). Functionally, CIPK serine-threonine protein kinases interact with CBL proteins. Binding of a CBL protein to the regulatory NAF domain of CIPK protein lead to the activation of the kinase in a calcium-dependent manner. The chain is CBL-interacting serine/threonine-protein kinase 2 (CIPK2) from Arabidopsis thaliana (Mouse-ear cress).